Consider the following 157-residue polypeptide: SsrA-binding protein (157 aa).

The tract at residues 131 to 157 (KQLHDKRESVKQRDWQRDKARLMRDKG) is disordered. A compositionally biased stretch (basic and acidic residues) spans 132–157 (QLHDKRESVKQRDWQRDKARLMRDKG).

This sequence belongs to the SmpB family.

The protein localises to the cytoplasm. Required for rescue of stalled ribosomes mediated by trans-translation. Binds to transfer-messenger RNA (tmRNA), required for stable association of tmRNA with ribosomes. tmRNA and SmpB together mimic tRNA shape, replacing the anticodon stem-loop with SmpB. tmRNA is encoded by the ssrA gene; the 2 termini fold to resemble tRNA(Ala) and it encodes a 'tag peptide', a short internal open reading frame. During trans-translation Ala-aminoacylated tmRNA acts like a tRNA, entering the A-site of stalled ribosomes, displacing the stalled mRNA. The ribosome then switches to translate the ORF on the tmRNA; the nascent peptide is terminated with the 'tag peptide' encoded by the tmRNA and targeted for degradation. The ribosome is freed to recommence translation, which seems to be the essential function of trans-translation. The polypeptide is SsrA-binding protein (Methylorubrum populi (strain ATCC BAA-705 / NCIMB 13946 / BJ001) (Methylobacterium populi)).